The primary structure comprises 934 residues: uncharacterized protein (934 aa).

The signal sequence occupies residues 1 to 24 (MKLKKRYLLLGSTLTVSAALILSA). Cys-25 carries the N-palmitoyl cysteine lipid modification. Cys-25 carries the S-diacylglycerol cysteine lipid modification. The disordered stretch occupies residues 111–131 (SGLKGRAQKNGSTDSSDGSSK). Residues 119–131 (KNGSTDSSDGSSK) are compositionally biased toward polar residues.

It localises to the cell membrane. This is an uncharacterized protein from Mycoplasma genitalium (strain ATCC 33530 / DSM 19775 / NCTC 10195 / G37) (Mycoplasmoides genitalium).